Reading from the N-terminus, the 203-residue chain is SPbeta prophage-derived uncharacterized protein YouA (203 aa).

The tract at residues 1–23 (MAFLNQDGDKYTSAKDDGTGNPI) is disordered. The span at 7–18 (DGDKYTSAKDDG) shows a compositional bias: basic and acidic residues.

This chain is SPbeta prophage-derived uncharacterized protein YouA (youA), found in Bacillus subtilis (strain 168).